Consider the following 394-residue polypeptide: Elongation factor Tu (394 aa).

Positions 10–204 (KPHVNVGTIG…ALDSYIPEPQ (195 aa)) constitute a tr-type G domain. A G1 region spans residues 19–26 (GHVDHGKT). 19–26 (GHVDHGKT) contacts GTP. Residue Thr26 participates in Mg(2+) binding. Positions 60–64 (GITIN) are G2. A G3 region spans residues 81-84 (DCPG). GTP is bound by residues 81–85 (DCPGH) and 136–139 (NKCD). The tract at residues 136-139 (NKCD) is G4. The G5 stretch occupies residues 174 to 176 (SAL).

This sequence belongs to the TRAFAC class translation factor GTPase superfamily. Classic translation factor GTPase family. EF-Tu/EF-1A subfamily. As to quaternary structure, monomer.

The protein resides in the cytoplasm. The catalysed reaction is GTP + H2O = GDP + phosphate + H(+). Functionally, GTP hydrolase that promotes the GTP-dependent binding of aminoacyl-tRNA to the A-site of ribosomes during protein biosynthesis. This Shewanella putrefaciens (Pseudomonas putrefaciens) protein is Elongation factor Tu.